Reading from the N-terminus, the 184-residue chain is ATP synthase subunit b, chloroplastic (184 aa).

The chain crosses the membrane as a helical span at residues 27-49 (LATNPINLSVVLGVLIFFGKGVL).

The protein belongs to the ATPase B chain family. F-type ATPases have 2 components, F(1) - the catalytic core - and F(0) - the membrane proton channel. F(1) has five subunits: alpha(3), beta(3), gamma(1), delta(1), epsilon(1). F(0) has four main subunits: a(1), b(1), b'(1) and c(10-14). The alpha and beta chains form an alternating ring which encloses part of the gamma chain. F(1) is attached to F(0) by a central stalk formed by the gamma and epsilon chains, while a peripheral stalk is formed by the delta, b and b' chains.

Its subcellular location is the plastid. It is found in the chloroplast thylakoid membrane. Functionally, f(1)F(0) ATP synthase produces ATP from ADP in the presence of a proton or sodium gradient. F-type ATPases consist of two structural domains, F(1) containing the extramembraneous catalytic core and F(0) containing the membrane proton channel, linked together by a central stalk and a peripheral stalk. During catalysis, ATP synthesis in the catalytic domain of F(1) is coupled via a rotary mechanism of the central stalk subunits to proton translocation. Component of the F(0) channel, it forms part of the peripheral stalk, linking F(1) to F(0). The sequence is that of ATP synthase subunit b, chloroplastic from Nicotiana tomentosiformis (Tobacco).